A 483-amino-acid polypeptide reads, in one-letter code: Replication factor C large subunit (483 aa).

Residue 44-51 (GSPGVGKT) coordinates ATP. A disordered region spans residues 415-483 (AVDHGGGIFA…DGQAGLSDFM (69 aa)). Residues 430–443 (AQSDTESDDDDDGD) are compositionally biased toward acidic residues. A compositionally biased stretch (basic and acidic residues) spans 451 to 463 (DEPKEESVNREQS).

This sequence belongs to the activator 1 small subunits family. RfcL subfamily. In terms of assembly, heteromultimer composed of small subunits (RfcS) and large subunits (RfcL).

Its function is as follows. Part of the RFC clamp loader complex which loads the PCNA sliding clamp onto DNA. The protein is Replication factor C large subunit of Natronomonas pharaonis (strain ATCC 35678 / DSM 2160 / CIP 103997 / JCM 8858 / NBRC 14720 / NCIMB 2260 / Gabara) (Halobacterium pharaonis).